Here is a 250-residue protein sequence, read N- to C-terminus: UPF0246 protein cce_3295 (250 aa).

Belongs to the UPF0246 family.

The chain is UPF0246 protein cce_3295 from Crocosphaera subtropica (strain ATCC 51142 / BH68) (Cyanothece sp. (strain ATCC 51142)).